A 63-amino-acid polypeptide reads, in one-letter code: Conotoxin PnMRCL-0111 (63 aa).

Positions 1–19 (MRCLPVFIVLLLLIVSAPG) are cleaved as a signal peptide. Positions 20-49 (FDARPKTEDDVPLSSFHDDLQRTVRTLLDI) are excised as a propeptide. Tryptophan 62 is subject to Tryptophan amide.

It belongs to the conotoxin T superfamily. In terms of processing, contains 2 disulfide bonds that can be either 'C1-C3, C2-C4' or 'C1-C4, C2-C3', since these disulfide connectivities have been observed for conotoxins with cysteine framework V (for examples, see AC P0DQQ7 and AC P81755). In terms of tissue distribution, expressed by the venom duct.

Its subcellular location is the secreted. In Conus pennaceus (Feathered cone), this protein is Conotoxin PnMRCL-0111.